The sequence spans 334 residues: Transcription initiation factor IIB (334 aa).

The segment at 34-65 (TETVCPECGGRQLVHDYERAELVCQSCGLVID) adopts a TFIIB-type zinc-finger fold. Zn(2+)-binding residues include C38, C41, C57, and C60. A run of 2 repeats spans residues 151-234 (SELD…SREL) and 245-326 (DYVP…ELAE).

The protein belongs to the TFIIB family.

Functionally, stabilizes TBP binding to an archaeal box-A promoter. Also responsible for recruiting RNA polymerase II to the pre-initiation complex (DNA-TBP-TFIIB). In Methanoregula boonei (strain DSM 21154 / JCM 14090 / 6A8), this protein is Transcription initiation factor IIB.